A 33-amino-acid polypeptide reads, in one-letter code: Neutrophil defensin 4 (33 aa).

Disulfide bonds link C3–C31, C5–C20, and C10–C30.

Belongs to the alpha-defensin family. Post-translationally, HANP-2 could be a product of proteolytic N-terminal amino acid removal from HANP-4.

It localises to the secreted. In terms of biological role, bactericidal activity, greater against Gram-positive bacteria. Low anti-fungi activity. In Mesocricetus auratus (Golden hamster), this protein is Neutrophil defensin 4.